A 66-amino-acid polypeptide reads, in one-letter code: MTVVRGVSALLRVFCIAMLAAGLGVALQPAAVTGAARAAGYESLMVPSAAMGRDIPVAFLAGGPHA.

Residues M1–A38 form the signal peptide.

This sequence belongs to the mycobacterial A85 antigen family. Homodimer.

The protein resides in the secreted. May have a role in host tissue attachment, whereby ligands may include the serum protein fibronectin and small sugars. The protein is MPT51 antigen (mpt51) of Mycobacterium avium.